The sequence spans 379 residues: Multicilin (379 aa).

Disordered regions lie at residues 26–46 (SRRS…PWKS) and 87–106 (LLGT…NPSL). A coiled-coil region spans residues 175 to 223 (EQYWKEVADQNQRALGTALIENNQLHVTLTQKQEEIASLRERNVQLKEL). Basic and acidic residues predominate over residues 289–309 (LQNRDPKRPRLQQEPDSKDCS). Positions 289–311 (LQNRDPKRPRLQQEPDSKDCSTR) are disordered.

Belongs to the geminin family. In terms of assembly, heterodimer (via coiled-coil domain) with GMNN (via coiled-coil domain); targets GMNN to the nucleus. Can form homodimers (in vitro, via coiled-coil domain), but these are much less stable than the heterodimer formed with GMNN.

The protein localises to the nucleus. Its function is as follows. Transcription regulator specifically required for multiciliate cell differentiation. Acts in a multiprotein complex containing E2F4 and E2F5 that binds and activates genes required for centriole biogenesis. Required for the deuterosome-mediated acentriolar pathway. Plays a role in mitotic cell cycle progression by promoting cell cycle exit. Modulates GMNN activity by reducing its affinity for CDT1. This chain is Multicilin (Mcidas), found in Rattus norvegicus (Rat).